The following is a 513-amino-acid chain: Putative fucosyltransferase-like protein (513 aa).

Positions 1 to 34 (MGVFSNLRGPRAGATHDEFPATNGSPSSSSSPSS) are disordered. Topologically, residues 1 to 39 (MGVFSNLRGPRAGATHDEFPATNGSPSSSSSPSSSIKRK) are cytoplasmic. The segment covering 25–34 (SPSSSSSPSS) has biased composition (low complexity). Residues 40–60 (LSNLLPLCVALVVIAEIGFLG) traverse the membrane as a helical; Signal-anchor for type II membrane protein segment. Residues 61-513 (RLDKVALVDT…PCAKFEVVFV (453 aa)) are Lumenal-facing. Asn348 and Asn493 each carry an N-linked (GlcNAc...) asparagine glycan.

It belongs to the glycosyltransferase 10 family.

It localises to the golgi apparatus. The protein localises to the golgi stack membrane. The protein operates within protein modification; protein glycosylation. In terms of biological role, may be involved in cell wall biosynthesis. May act as a fucosyltransferase. This Arabidopsis thaliana (Mouse-ear cress) protein is Putative fucosyltransferase-like protein (FUT12).